The following is a 272-amino-acid chain: Phosphoglycolate phosphatase (272 aa).

The active-site Nucleophile is the aspartate 19. Mg(2+)-binding residues include aspartate 19, aspartate 21, and aspartate 182.

The protein belongs to the HAD-like hydrolase superfamily. CbbY/CbbZ/Gph/YieH family. Mg(2+) is required as a cofactor.

The enzyme catalyses 2-phosphoglycolate + H2O = glycolate + phosphate. The protein operates within organic acid metabolism; glycolate biosynthesis; glycolate from 2-phosphoglycolate: step 1/1. In terms of biological role, specifically catalyzes the dephosphorylation of 2-phosphoglycolate. Is involved in the dissimilation of the intracellular 2-phosphoglycolate formed during the DNA repair of 3'-phosphoglycolate ends, a major class of DNA lesions induced by oxidative stress. The protein is Phosphoglycolate phosphatase of Pseudomonas syringae pv. syringae (strain B728a).